The following is a 247-amino-acid chain: MISDINALKYKALKYKKVLLKVSGEALMGDKQFGHEYDIIKKIAIDIKEVIALGVEVAIVVGGGNIYRGINAALVGMDRASADYIGMLATVINALTLQNVMESLNIYTRVLSAIPMMSVCEPYIRRKAKRHMEKKRVVIFAGGTGNPFCTTDSAAVLRAIEMNCDILLKATQVDGVYDSDPKKNPDAKKYFTISYKDVITNNLQVMDTAAIAVARENKLPIRVFSIKEQGNFARVIQDKGEYTAIEE.

21–24 lines the ATP pocket; it reads KVSG. Gly63 contributes to the UMP binding site. ATP-binding residues include Gly64 and Arg68. Residues Asp83 and 144–151 each bind UMP; that span reads TGNPFCTT. 4 residues coordinate ATP: Thr171, Gln172, Tyr177, and Asp180.

Belongs to the UMP kinase family. In terms of assembly, homohexamer.

It is found in the cytoplasm. The enzyme catalyses UMP + ATP = UDP + ADP. It participates in pyrimidine metabolism; CTP biosynthesis via de novo pathway; UDP from UMP (UMPK route): step 1/1. With respect to regulation, inhibited by UTP. Functionally, catalyzes the reversible phosphorylation of UMP to UDP. The chain is Uridylate kinase from Rickettsia rickettsii (strain Sheila Smith).